The sequence spans 190 residues: Potassium-transporting ATPase KdpC subunit (190 aa).

The helical transmembrane segment at 11 to 31 (LIVLMSLITGVAYPLVVTGVA) threads the bilayer.

This sequence belongs to the KdpC family. The system is composed of three essential subunits: KdpA, KdpB and KdpC.

The protein resides in the cell inner membrane. Its function is as follows. Part of the high-affinity ATP-driven potassium transport (or Kdp) system, which catalyzes the hydrolysis of ATP coupled with the electrogenic transport of potassium into the cytoplasm. This subunit acts as a catalytic chaperone that increases the ATP-binding affinity of the ATP-hydrolyzing subunit KdpB by the formation of a transient KdpB/KdpC/ATP ternary complex. The sequence is that of Potassium-transporting ATPase KdpC subunit from Pseudomonas syringae pv. tomato (strain ATCC BAA-871 / DC3000).